A 332-amino-acid polypeptide reads, in one-letter code: Polygalacturonase inhibitor 1 (332 aa).

An N-terminal signal peptide occupies residues 1–24 (MASTASFMLAVLLAVAVAAAPARA). 2 disulfides stabilise this stretch: cysteine 27–cysteine 58 and cysteine 59–cysteine 66. LRR repeat units lie at residues 72–96 (VNNVFIDGANDVRGQIPSAVAGLTA), 97–118 (LMSLSLFRLPGLSGPIPACLTA), 119–142 (LSNLQFLTISHTNVSGVIPDSLAR), 143–166 (IRSLDSVDLSHNSLTGPIPNSFSD), 167–192 (LPNLRSLDLRSNKLTGCIPAGLVQGQ), 193–215 (FRSLILSYNQLTGPIPRDDAQDE), 216–236 (INTVDLSHNRLTGDASFLFAA), 237–259 (GRPIGKVDLSWNDLDFDLSKLVF), 260–283 (PPELTYLDLSHNRIRGTVPRSLAA), and 284–310 (LSTLQTLDLSYNRLCGPLPRLHGVIRH). The N-linked (GlcNAc...) asparagine glycan is linked to asparagine 131. Intrachain disulfides connect cysteine 298–cysteine 312, cysteine 298–cysteine 320, and cysteine 320–cysteine 329.

Belongs to the polygalacturonase-inhibiting protein family. In terms of tissue distribution, highly expressed in calli, immature and mature panicles, and in three inner floral organs: lodicules, stamens and carpels. Expressed at low level in seedling roots and mature stems.

The protein resides in the secreted. It localises to the cell wall. Inhibitor of fungal polygalacturonase. Regulates floral organ number. The sequence is that of Polygalacturonase inhibitor 1 from Oryza sativa subsp. japonica (Rice).